Consider the following 332-residue polypeptide: 2,3-diketo-L-gulonate reductase (332 aa).

His44 (proton donor) is an active-site residue. Residues 168–174, 224–225, and 304–306 each bind NAD(+); these read ITMVDMS, WK, and GHE.

Belongs to the LDH2/MDH2 oxidoreductase family. DlgD subfamily. As to quaternary structure, homodimer.

Its subcellular location is the cytoplasm. It carries out the reaction 3-dehydro-L-gulonate + NAD(+) = 2,3-dioxo-L-gulonate + NADH + H(+). It catalyses the reaction 3-dehydro-L-gulonate + NADP(+) = 2,3-dioxo-L-gulonate + NADPH + H(+). Functionally, catalyzes the reduction of 2,3-diketo-L-gulonate in the presence of NADH, to form 3-keto-L-gulonate. The protein is 2,3-diketo-L-gulonate reductase of Salmonella heidelberg (strain SL476).